A 169-amino-acid chain; its full sequence is Der GTPase-activating protein YihI (169 aa).

Disordered regions lie at residues 1-100 (MKPS…AELE) and 144-169 (GLSY…LRGN). Positions 10-19 (SKGHAKARRK) are enriched in basic residues. Basic and acidic residues predominate over residues 20–30 (TREELDQEARD). Over residues 31-40 (RKRQKKRRGH) the composition is skewed to basic residues. Polar residues predominate over residues 49–58 (GNTTSGSKGQ). Residues 147–159 (YDDDEEEEEDEKQ) are compositionally biased toward acidic residues. The span at 160–169 (EDMMRLLRGN) shows a compositional bias: basic and acidic residues.

This sequence belongs to the YihI family. As to quaternary structure, interacts with Der.

A GTPase-activating protein (GAP) that modifies Der/EngA GTPase function. May play a role in ribosome biogenesis. The protein is Der GTPase-activating protein YihI of Escherichia coli O6:H1 (strain CFT073 / ATCC 700928 / UPEC).